Reading from the N-terminus, the 369-residue chain is Quinolinate synthase (369 aa).

Residues H47 and S64 each contribute to the iminosuccinate site. A [4Fe-4S] cluster-binding site is contributed by C111. Residues 142–144 (YVN) and S163 each bind iminosuccinate. Position 231 (C231) interacts with [4Fe-4S] cluster. Iminosuccinate-binding positions include 257 to 259 (HPE) and T274. C321 contributes to the [4Fe-4S] cluster binding site.

Belongs to the quinolinate synthase family. Type 3 subfamily. It depends on [4Fe-4S] cluster as a cofactor.

It is found in the cytoplasm. The catalysed reaction is iminosuccinate + dihydroxyacetone phosphate = quinolinate + phosphate + 2 H2O + H(+). The protein operates within cofactor biosynthesis; NAD(+) biosynthesis; quinolinate from iminoaspartate: step 1/1. Functionally, catalyzes the condensation of iminoaspartate with dihydroxyacetone phosphate to form quinolinate. The protein is Quinolinate synthase of Bacillus pumilus (strain SAFR-032).